Reading from the N-terminus, the 408-residue chain is GTPase HflX (408 aa).

A Hflx-type G domain is found at 198-361 (PRVSLVGYTN…LIVREMERHY (164 aa)). GTP is bound by residues 204–211 (GYTNAGKS), 229–233 (FVTLD), 251–254 (DTVG), 317–320 (NKAD), and 339–341 (SAK). Positions 211 and 231 each coordinate Mg(2+).

Belongs to the TRAFAC class OBG-HflX-like GTPase superfamily. HflX GTPase family. As to quaternary structure, monomer. Associates with the 50S ribosomal subunit. Mg(2+) is required as a cofactor.

The protein localises to the cytoplasm. Its function is as follows. GTPase that associates with the 50S ribosomal subunit and may have a role during protein synthesis or ribosome biogenesis. In Spirochaeta thermophila (strain ATCC 49972 / DSM 6192 / RI 19.B1), this protein is GTPase HflX.